An 81-amino-acid chain; its full sequence is Putative truncated GMC-type inactive oxidoreductase R833 (81 aa).

Belongs to the GMC oxidoreductase family.

The sequence is that of Putative truncated GMC-type inactive oxidoreductase R833 from Acanthamoeba polyphaga mimivirus (APMV).